Here is a 99-residue protein sequence, read N- to C-terminus: UPF0213 protein YazA (99 aa).

The GIY-YIG domain occupies 4–79 (NNHFFYVVKC…KKLTRKKKEL (76 aa)).

The protein belongs to the UPF0213 family.

The chain is UPF0213 protein YazA (yazA) from Bacillus subtilis (strain 168).